The chain runs to 759 residues: Phosphoribosylformylglycinamidine synthase subunit PurL (759 aa).

Residue His46 is part of the active site. Residues Tyr49 and Lys88 each coordinate ATP. A Mg(2+)-binding site is contributed by Glu90. Substrate contacts are provided by residues 91–94 and Arg113; that span reads SHNH. His92 acts as the Proton acceptor in catalysis. Asp114 contributes to the Mg(2+) binding site. Gln237 is a binding site for substrate. Asp265 contributes to the Mg(2+) binding site. 309 to 311 lines the substrate pocket; it reads ESQ. Residues Asp498 and Gly535 each contribute to the ATP site. Asn536 is a Mg(2+) binding site. Ser538 is a substrate binding site.

The protein belongs to the FGAMS family. Monomer. Part of the FGAM synthase complex composed of 1 PurL, 1 PurQ and 2 PurS subunits.

It localises to the cytoplasm. It catalyses the reaction N(2)-formyl-N(1)-(5-phospho-beta-D-ribosyl)glycinamide + L-glutamine + ATP + H2O = 2-formamido-N(1)-(5-O-phospho-beta-D-ribosyl)acetamidine + L-glutamate + ADP + phosphate + H(+). Its pathway is purine metabolism; IMP biosynthesis via de novo pathway; 5-amino-1-(5-phospho-D-ribosyl)imidazole from N(2)-formyl-N(1)-(5-phospho-D-ribosyl)glycinamide: step 1/2. Its function is as follows. Part of the phosphoribosylformylglycinamidine synthase complex involved in the purines biosynthetic pathway. Catalyzes the ATP-dependent conversion of formylglycinamide ribonucleotide (FGAR) and glutamine to yield formylglycinamidine ribonucleotide (FGAM) and glutamate. The FGAM synthase complex is composed of three subunits. PurQ produces an ammonia molecule by converting glutamine to glutamate. PurL transfers the ammonia molecule to FGAR to form FGAM in an ATP-dependent manner. PurS interacts with PurQ and PurL and is thought to assist in the transfer of the ammonia molecule from PurQ to PurL. This chain is Phosphoribosylformylglycinamidine synthase subunit PurL, found in Anaeromyxobacter sp. (strain K).